The chain runs to 193 residues: Peptidyl-tRNA hydrolase (193 aa).

Position 17 (histidine 17) interacts with tRNA. Catalysis depends on histidine 22, which acts as the Proton acceptor. Positions 68, 70, and 116 each coordinate tRNA.

Belongs to the PTH family. In terms of assembly, monomer.

It localises to the cytoplasm. The enzyme catalyses an N-acyl-L-alpha-aminoacyl-tRNA + H2O = an N-acyl-L-amino acid + a tRNA + H(+). Hydrolyzes ribosome-free peptidyl-tRNAs (with 1 or more amino acids incorporated), which drop off the ribosome during protein synthesis, or as a result of ribosome stalling. In terms of biological role, catalyzes the release of premature peptidyl moieties from peptidyl-tRNA molecules trapped in stalled 50S ribosomal subunits, and thus maintains levels of free tRNAs and 50S ribosomes. The sequence is that of Peptidyl-tRNA hydrolase from Xanthomonas euvesicatoria pv. vesicatoria (strain 85-10) (Xanthomonas campestris pv. vesicatoria).